Consider the following 408-residue polypeptide: Gustatory receptor 10a (408 aa).

The Cytoplasmic segment spans residues 1 to 20 (MTSPDERKSFWERHEFKFYR). A helical membrane pass occupies residues 21–38 (YGHVYALIYGQVVIDYVP). The Extracellular segment spans residues 39-48 (QRALKRGVKV). A helical transmembrane segment spans residues 49 to 69 (LLIAYGHLFSMLLIVVLPGYF). Topologically, residues 70–86 (CYHFRTLTDTLDRRLQL) are cytoplasmic. A helical transmembrane segment spans residues 87 to 107 (LFYVSFTNTAIKYATVIVTYV). Over 108–144 (ANTVHFEAINQRCTMQRTHLEFEFKNAPQEPKRPFEF) the chain is Extracellular. Residues 145-165 (FMYFKFCLINLMMMIQVCGIF) traverse the membrane as a helical segment. The Cytoplasmic segment spans residues 166-270 (AQYGEVGKGS…RESFRMHQFQ (105 aa)). Residues 271–291 (LIGLMLSTLINNLTNFYTLFH) traverse the membrane as a helical segment. Residues 292–304 (MLAKQSLEEVSYP) lie on the Extracellular side of the membrane. Residues 305 to 325 (VVVGSVYATGFYIDTYIVALI) traverse the membrane as a helical segment. Residues 326 to 381 (NEHIKLELEAVALTMRRFAEPREMDERLTREIEHLSLELLNYQPPMLCGLLHLDRR) lie on the Cytoplasmic side of the membrane. A helical transmembrane segment spans residues 382 to 402 (LVYLIAVTAFSYFITLVQFDL). Topologically, residues 403–408 (YLRKKS) are extracellular.

This sequence belongs to the insect chemoreceptor superfamily. Gustatory receptor (GR) family. Gr10a subfamily. As to expression, expressed in the medial aspect of the third antennal segment, and in neurons of the terminal external chemosensory organ of larvae.

It is found in the cell membrane. In terms of biological role, probable gustatory receptor which mediates acceptance or avoidance behavior, depending on its substrates. The protein is Gustatory receptor 10a (Gr10a) of Drosophila melanogaster (Fruit fly).